We begin with the raw amino-acid sequence, 237 residues long: Cytochrome c oxidase subunit 2 (237 aa).

Residues 1-30 lie on the Mitochondrial intermembrane side of the membrane; that stretch reads MNLVAPTPWGLFFQDSATPQMEGIEELHNN. A helical transmembrane segment spans residues 31–51; the sequence is IMFYLTIILFSVTWMMITIIK. At 52-67 the chain is on the mitochondrial matrix side; it reads SFVNTKSPISHKYMNH. The helical transmembrane segment at 68-94 threads the bilayer; sequence GTLIELIWTITPAVILILIAFPSFKLL. The Mitochondrial intermembrane segment spans residues 95–237; sequence YLMDEVMDPS…SVSLKNFYYD (143 aa). Cu cation contacts are provided by histidine 176, cysteine 211, glutamate 213, cysteine 215, histidine 219, and methionine 222. Mg(2+) is bound at residue glutamate 213.

It belongs to the cytochrome c oxidase subunit 2 family. Component of the cytochrome c oxidase (complex IV, CIV), a multisubunit enzyme composed of a catalytic core of 3 subunits and several supernumerary subunits. The complex exists as a monomer or a dimer and forms supercomplexes (SCs) in the inner mitochondrial membrane with ubiquinol-cytochrome c oxidoreductase (cytochrome b-c1 complex, complex III, CIII). Cu cation serves as cofactor.

It localises to the mitochondrion inner membrane. It catalyses the reaction 4 Fe(II)-[cytochrome c] + O2 + 8 H(+)(in) = 4 Fe(III)-[cytochrome c] + 2 H2O + 4 H(+)(out). Its function is as follows. Component of the cytochrome c oxidase, the last enzyme in the mitochondrial electron transport chain which drives oxidative phosphorylation. The respiratory chain contains 3 multisubunit complexes succinate dehydrogenase (complex II, CII), ubiquinol-cytochrome c oxidoreductase (cytochrome b-c1 complex, complex III, CIII) and cytochrome c oxidase (complex IV, CIV), that cooperate to transfer electrons derived from NADH and succinate to molecular oxygen, creating an electrochemical gradient over the inner membrane that drives transmembrane transport and the ATP synthase. Cytochrome c oxidase is the component of the respiratory chain that catalyzes the reduction of oxygen to water. Electrons originating from reduced cytochrome c in the intermembrane space (IMS) are transferred via the dinuclear copper A center (CU(A)) of subunit 2 and heme A of subunit 1 to the active site in subunit 1, a binuclear center (BNC) formed by heme A3 and copper B (CU(B)). The BNC reduces molecular oxygen to 2 water molecules using 4 electrons from cytochrome c in the IMS and 4 protons from the mitochondrial matrix. This chain is Cytochrome c oxidase subunit 2 (COX2), found in Trichophyton rubrum (Athlete's foot fungus).